A 173-amino-acid chain; its full sequence is MFSHIIVGAAHGSTLYVGDMLFYAILFIVLMALIAKFAWGPVNAMLKERADRISNDIDSAEQSRIEAEKLAKQRKEALDNSHAEATSIINNAKDSGAKERELIIGNAQNEAKSLKDKAKQDIEQERADALKSAQDDIASLSIEIASKVIKKELDENSQKDLIDSYIEGLGDSK.

Residues 15–35 traverse the membrane as a helical segment; it reads LYVGDMLFYAILFIVLMALIA.

This sequence belongs to the ATPase B chain family. As to quaternary structure, F-type ATPases have 2 components, F(1) - the catalytic core - and F(0) - the membrane proton channel. F(1) has five subunits: alpha(3), beta(3), gamma(1), delta(1), epsilon(1). F(0) has three main subunits: a(1), b(2) and c(10-14). The alpha and beta chains form an alternating ring which encloses part of the gamma chain. F(1) is attached to F(0) by a central stalk formed by the gamma and epsilon chains, while a peripheral stalk is formed by the delta and b chains.

The protein localises to the cell membrane. F(1)F(0) ATP synthase produces ATP from ADP in the presence of a proton or sodium gradient. F-type ATPases consist of two structural domains, F(1) containing the extramembraneous catalytic core and F(0) containing the membrane proton channel, linked together by a central stalk and a peripheral stalk. During catalysis, ATP synthesis in the catalytic domain of F(1) is coupled via a rotary mechanism of the central stalk subunits to proton translocation. Functionally, component of the F(0) channel, it forms part of the peripheral stalk, linking F(1) to F(0). The polypeptide is ATP synthase subunit b (Pediococcus pentosaceus (strain ATCC 25745 / CCUG 21536 / LMG 10740 / 183-1w)).